The primary structure comprises 184 residues: 3-hydroxyanthranilate 3,4-dioxygenase (184 aa).

R44 serves as a coordination point for O2. Fe cation-binding residues include H48, E54, and H92. Residue E54 coordinates substrate. Residues R96 and E106 each coordinate substrate. Positions 121, 126, 162, and 165 each coordinate a divalent metal cation.

The protein belongs to the 3-HAO family. The cofactor is Fe(2+).

It is found in the cytoplasm. It catalyses the reaction 3-hydroxyanthranilate + O2 = (2Z,4Z)-2-amino-3-carboxymuconate 6-semialdehyde. Its pathway is cofactor biosynthesis; NAD(+) biosynthesis; quinolinate from L-kynurenine: step 3/3. Its function is as follows. Catalyzes the oxidative ring opening of 3-hydroxyanthranilate to 2-amino-3-carboxymuconate semialdehyde, which spontaneously cyclizes to quinolinate. The polypeptide is 3-hydroxyanthranilate 3,4-dioxygenase (Pyricularia oryzae (strain 70-15 / ATCC MYA-4617 / FGSC 8958) (Rice blast fungus)).